The sequence spans 303 residues: Ornithine carbamoyltransferase (303 aa).

Residues 52–55, Gln79, Arg103, and 130–133 each bind carbamoyl phosphate; these read STRT and HPCQ. Residues Asn161, Asp222, and 226–227 each bind L-ornithine; that span reads SM. Carbamoyl phosphate contacts are provided by residues 262–263 and Lys290; that span reads CL.

The protein belongs to the aspartate/ornithine carbamoyltransferase superfamily. OTCase family.

It is found in the cytoplasm. The enzyme catalyses carbamoyl phosphate + L-ornithine = L-citrulline + phosphate + H(+). The protein operates within amino-acid biosynthesis; L-arginine biosynthesis; L-arginine from L-ornithine and carbamoyl phosphate: step 1/3. Its function is as follows. Reversibly catalyzes the transfer of the carbamoyl group from carbamoyl phosphate (CP) to the N(epsilon) atom of ornithine (ORN) to produce L-citrulline. The protein is Ornithine carbamoyltransferase of Desulfotalea psychrophila (strain LSv54 / DSM 12343).